The primary structure comprises 121 residues: Large ribosomal subunit protein uL14c (121 aa).

This sequence belongs to the universal ribosomal protein uL14 family. In terms of assembly, part of the 50S ribosomal subunit.

It is found in the plastid. It localises to the chloroplast. Its function is as follows. Binds to 23S rRNA. This chain is Large ribosomal subunit protein uL14c, found in Tetradesmus obliquus (Green alga).